The chain runs to 393 residues: Dual specificity mitogen-activated protein kinase kinase 1 (393 aa).

Residues 1-27 (MPKKKPTPIQLNPAPDGSAVNGTSSAE) form a disordered region. Residues 68 to 361 (FEKISELGAG…LKQLMVHAFI (294 aa)) form the Protein kinase domain. Residues 74–82 (LGAGNGGVV) and Lys97 each bind ATP. Asp190 functions as the Proton acceptor in the catalytic mechanism. Phosphoserine; by RAF is present on residues Ser218 and Ser222. Residues 270-307 (ELELMFGCQVEGDAAETPPRPRTPGRPLSSYGMDSRPP) form an RAF1-binding region. Thr286 carries the phosphothreonine modification. Thr292 carries the post-translational modification Phosphothreonine; by MAPK1. At Ser298 the chain carries Phosphoserine; by PAK.

Belongs to the protein kinase superfamily. STE Ser/Thr protein kinase family. MAP kinase kinase subfamily. Found in a complex with at least BRAF, HRAS, MAP2K1, MAPK3/ERK1 and RGS14. Forms a heterodimer with MAP2K2/MEK2. Forms heterodimers with KSR2 which further dimerize to form tetramers. Interacts with KSR1 or KSR2 and BRAF; the interaction with KSR1 or KSR2 mediates KSR1-BRAF or KSR2-BRAF dimerization. Interacts with ARBB2, LAMTOR3, MAPK1/ERK2 and RAF1. Interacts with MAPK1/ERK2. Interacts with MORG1. Interacts with PPARG. Interacts with isoform 1 of VRK2. Interacts with SGK1. Interacts with BIRC6/bruce. Interacts with KAT7; the interaction promotes KAT7 phosphorylation. Interacts with RAF1 and NEK10; the interaction is required for ERK1/2-signaling pathway activation in response to UV irradiation. Interacts with TRAF3IP3. Interacts with MOS. In terms of processing, phosphorylation at Ser-218 and Ser-222 by MAP kinase kinase kinases (BRAF or MEKK1) positively regulates the kinase activity. Also phosphorylated at Thr-292 by MAPK1/ERK2 and at Ser-298 by PAK. MAPK1/ERK2 phosphorylation of Thr-292 occurs in response to cellular adhesion and leads to inhibition of Ser-298 phosphorylation by PAK. Autophosphorylated at Ser-218 and Ser-222, autophosphosphorylation is promoted by NEK10 following UV irradiation.

The protein resides in the cytoplasm. The protein localises to the cytoskeleton. Its subcellular location is the microtubule organizing center. It is found in the centrosome. It localises to the spindle pole body. The protein resides in the nucleus. The protein localises to the membrane. The enzyme catalyses L-seryl-[protein] + ATP = O-phospho-L-seryl-[protein] + ADP + H(+). The catalysed reaction is L-threonyl-[protein] + ATP = O-phospho-L-threonyl-[protein] + ADP + H(+). It catalyses the reaction L-tyrosyl-[protein] + ATP = O-phospho-L-tyrosyl-[protein] + ADP + H(+). Ras proteins such as HRAS mediate the activation of RAF proteins such as RAF1 or BRAF which in turn activate extracellular signal-regulated kinases (ERK) through MAPK (mitogen-activated protein kinases) and ERK kinases MAP2K1/MEK1 and MAP2K2/MEK2. Activation occurs through phosphorylation of Ser-218 and Ser-222. MAP2K1/MEK1 binds KSR1 or KSR2 releasing the inhibitory intramolecular interaction between KSR1 or KSR2 protein kinase and N-terminal domains. This allows KSR1 or KSR2 dimerization with BRAF leading to BRAF activation and phosphorylation of MAP2K1. MAP2K1/MEK1 is also the target of negative feed-back regulation by its substrate kinases, such as MAPK1/ERK2. These phosphorylate MAP2K1/MEK1 on Thr-292, thereby facilitating dephosphorylation of the activating residues Ser-218 and Ser-222. Inhibited by serine/threonine phosphatase 2A. In terms of biological role, dual specificity protein kinase which acts as an essential component of the MAP kinase signal transduction pathway. Binding of extracellular ligands such as growth factors, cytokines and hormones to their cell-surface receptors activates RAS and this initiates RAF1 activation. RAF1 then further activates the dual-specificity protein kinases MAP2K1/MEK1 and MAP2K2/MEK2. Both MAP2K1/MEK1 and MAP2K2/MEK2 function specifically in the MAPK/ERK cascade, and catalyze the concomitant phosphorylation of a threonine and a tyrosine residue in a Thr-Glu-Tyr sequence located in the extracellular signal-regulated kinases MAPK3/ERK1 and MAPK1/ERK2, leading to their activation and further transduction of the signal within the MAPK/ERK cascade. Activates BRAF in a KSR1 or KSR2-dependent manner; by binding to KSR1 or KSR2 releases the inhibitory intramolecular interaction between KSR1 or KSR2 protein kinase and N-terminal domains which promotes KSR1 or KSR2-BRAF dimerization and BRAF activation. Depending on the cellular context, this pathway mediates diverse biological functions such as cell growth, adhesion, survival and differentiation, predominantly through the regulation of transcription, metabolism and cytoskeletal rearrangements. One target of the MAPK/ERK cascade is peroxisome proliferator-activated receptor gamma (PPARG), a nuclear receptor that promotes differentiation and apoptosis. MAP2K1/MEK1 has been shown to export PPARG from the nucleus. The MAPK/ERK cascade is also involved in the regulation of endosomal dynamics, including lysosome processing and endosome cycling through the perinuclear recycling compartment (PNRC), as well as in the fragmentation of the Golgi apparatus during mitosis. The protein is Dual specificity mitogen-activated protein kinase kinase 1 (MAP2K1) of Pan troglodytes (Chimpanzee).